We begin with the raw amino-acid sequence, 1071 residues long: Ubiquitin carboxyl-terminal hydrolase 7 (1071 aa).

The interval 467 to 532 (KARLQQEQQQ…MPTTPEIPPP (66 aa)) is disordered. A compositionally biased stretch (low complexity) spans 471 to 480 (QQEQQQQQQQ). The segment covering 481–495 (PDSQDSFSAKESSTK) has biased composition (polar residues). 2 stretches are compositionally biased toward pro residues: residues 497–507 (PEPPSWKPPDL) and 516–532 (PPPP…IPPP). One can recognise a USP domain in the interval 609–1069 (TGLRNLGNTC…DVYVLFYERV (461 aa)). Residue Cys-618 is the Nucleophile of the active site. Residues 913-942 (RMLGGSGKRSSSSTPFSTGGNDSNNSSDYK) form a disordered region. A compositionally biased stretch (polar residues) spans 920–932 (KRSSSSTPFSTGG). His-1014 serves as the catalytic Proton acceptor.

The protein belongs to the peptidase C19 family.

It is found in the cytoplasm. It catalyses the reaction Thiol-dependent hydrolysis of ester, thioester, amide, peptide and isopeptide bonds formed by the C-terminal Gly of ubiquitin (a 76-residue protein attached to proteins as an intracellular targeting signal).. Involved in the sorting of ubiquitinated cargo proteins at the multivesicular body (MVB). The sequence is that of Ubiquitin carboxyl-terminal hydrolase 7 (UBP7) from Saccharomyces cerevisiae (strain ATCC 204508 / S288c) (Baker's yeast).